The following is a 1938-amino-acid chain: Myosin-6 (1938 aa).

The region spanning 32-81 (DIRTECFVPDDKEEYVKAKVVSREGGKVTAETENGKTVTIKEDQVMQQNP) is the Myosin N-terminal SH3-like domain. The region spanning 85 to 780 (DKIEDMAMLT…LLGLLEEMRD (696 aa)) is the Myosin motor domain. Lysine 129 bears the N6,N6,N6-trimethyllysine mark. 178-185 (GESGAGKT) serves as a coordination point for ATP. Phosphothreonine is present on threonine 379. Phosphoserine is present on serine 417. Actin-binding stretches follow at residues 657–679 (LNKL…IPNE) and 759–773 (KFGH…GLLG). One can recognise an IQ domain in the interval 783-812 (LSRIITRIQAQARGQLMRIEFKKIVERRDA). Calmodulin-binding regions lie at residues 790–807 (IQAQ…KKIV) and 816–833 (IQWN…PWMK). Residues 842–1938 (LKSAETEKEM…IGAKKMHDEE (1097 aa)) adopt a coiled-coil conformation. 2 positions are modified to phosphoserine: serine 1090 and serine 1139. Tyrosine 1261 bears the Phosphotyrosine mark. Serine 1271 carries the post-translational modification Phosphoserine. 2 positions are modified to phosphothreonine: threonine 1277 and threonine 1284. At serine 1309 the chain carries Phosphoserine. At tyrosine 1310 the chain carries Phosphotyrosine. Threonine 1311 carries the post-translational modification Phosphothreonine. Serine 1512 is subject to Phosphoserine. The residue at position 1515 (threonine 1515) is a Phosphothreonine. Residues 1909-1938 (EERADIAESQVNKLRAKSRDIGAKKMHDEE) form a disordered region. Positions 1925-1938 (KSRDIGAKKMHDEE) are enriched in basic and acidic residues.

It belongs to the TRAFAC class myosin-kinesin ATPase superfamily. Myosin family. Muscle myosin is a hexameric protein that consists of 2 heavy chain subunits (MHC), 2 alkali light chain subunits (MLC) and 2 regulatory light chain subunits (MLC-2).

The protein resides in the cytoplasm. Its subcellular location is the myofibril. Functionally, muscle contraction. This Mus musculus (Mouse) protein is Myosin-6 (Myh6).